We begin with the raw amino-acid sequence, 933 residues long: Phosphoenolpyruvate carboxylase (933 aa).

Catalysis depends on residues histidine 158 and lysine 592.

It belongs to the PEPCase type 1 family. Mg(2+) serves as cofactor.

It carries out the reaction oxaloacetate + phosphate = phosphoenolpyruvate + hydrogencarbonate. Functionally, forms oxaloacetate, a four-carbon dicarboxylic acid source for the tricarboxylic acid cycle. This chain is Phosphoenolpyruvate carboxylase, found in Nitrosomonas europaea (strain ATCC 19718 / CIP 103999 / KCTC 2705 / NBRC 14298).